Here is a 52-residue protein sequence, read N- to C-terminus: UPF0391 membrane protein Tgr7_2500 (52 aa).

The next 2 helical transmembrane spans lie at 4–24 and 29–49; these read WALIFLIVAIIAGTLGFSGVA and WIAQVLFLVFLALLVISLLGG.

It belongs to the UPF0391 family.

The protein localises to the cell membrane. This Thioalkalivibrio sulfidiphilus (strain HL-EbGR7) protein is UPF0391 membrane protein Tgr7_2500.